A 541-amino-acid polypeptide reads, in one-letter code: Glutamyl-tRNA(Gln) amidotransferase subunit B, mitochondrial (541 aa).

This sequence belongs to the GatB/GatE family. GatB subfamily. In terms of assembly, subunit of the heterotrimeric GatFAB amidotransferase (AdT) complex, composed of A, B and F subunits.

The protein resides in the mitochondrion. The enzyme catalyses L-glutamyl-tRNA(Gln) + L-glutamine + ATP + H2O = L-glutaminyl-tRNA(Gln) + L-glutamate + ADP + phosphate + H(+). Its function is as follows. Allows the formation of correctly charged Gln-tRNA(Gln) through the transamidation of misacylated Glu-tRNA(Gln) in the mitochondria. The reaction takes place in the presence of glutamine and ATP through an activated gamma-phospho-Glu-tRNA(Gln). The protein is Glutamyl-tRNA(Gln) amidotransferase subunit B, mitochondrial of Saccharomyces cerevisiae (strain YJM789) (Baker's yeast).